The primary structure comprises 336 residues: Dihydroorotate dehydrogenase (quinone) (336 aa).

FMN contacts are provided by residues 62–66 (AGLDK) and T86. Substrate is bound at residue K66. 111 to 115 (NRMGF) serves as a coordination point for substrate. N139 and N172 together coordinate FMN. Residue N172 coordinates substrate. S175 acts as the Nucleophile in catalysis. N177 serves as a coordination point for substrate. 2 residues coordinate FMN: K217 and T245. 246 to 247 (NT) provides a ligand contact to substrate. Residues G268, G297, and 318–319 (YS) each bind FMN.

It belongs to the dihydroorotate dehydrogenase family. Type 2 subfamily. In terms of assembly, monomer. The cofactor is FMN.

The protein localises to the cell membrane. It carries out the reaction (S)-dihydroorotate + a quinone = orotate + a quinol. The protein operates within pyrimidine metabolism; UMP biosynthesis via de novo pathway; orotate from (S)-dihydroorotate (quinone route): step 1/1. Catalyzes the conversion of dihydroorotate to orotate with quinone as electron acceptor. This Yersinia pseudotuberculosis serotype O:1b (strain IP 31758) protein is Dihydroorotate dehydrogenase (quinone).